The sequence spans 152 residues: UPF0260 protein BR1477/BS1330_I1471 (152 aa).

Belongs to the UPF0260 family.

This Brucella suis biovar 1 (strain 1330) protein is UPF0260 protein BR1477/BS1330_I1471.